Reading from the N-terminus, the 689-residue chain is DNA ligase (689 aa).

NAD(+) is bound by residues D40 to D44, S89 to L90, and E121. K123 functions as the N6-AMP-lysine intermediate in the catalytic mechanism. NAD(+)-binding residues include R144, E179, K295, and K319. 4 residues coordinate Zn(2+): C413, C416, C431, and C437. Positions R610–V689 constitute a BRCT domain.

The protein belongs to the NAD-dependent DNA ligase family. LigA subfamily. Mg(2+) serves as cofactor. Requires Mn(2+) as cofactor.

It carries out the reaction NAD(+) + (deoxyribonucleotide)n-3'-hydroxyl + 5'-phospho-(deoxyribonucleotide)m = (deoxyribonucleotide)n+m + AMP + beta-nicotinamide D-nucleotide.. DNA ligase that catalyzes the formation of phosphodiester linkages between 5'-phosphoryl and 3'-hydroxyl groups in double-stranded DNA using NAD as a coenzyme and as the energy source for the reaction. It is essential for DNA replication and repair of damaged DNA. The polypeptide is DNA ligase (Rickettsia africae (strain ESF-5)).